Reading from the N-terminus, the 153-residue chain is MAFKFENTGERPRTVHHLCEVQETSLLELQLQCVYCKKELSSSEVYNFACKDLRLVYREDSPYAVCNFCLLFYSKVRKIRHYNYSLYGASLVALTKKELFDLLIRCYRCQQPLTPEEKQLHCEYKKRFHRISRTWTGLCLQCWRHTTSTETAV.

Zinc fingers lie at residues Cys-33–Cys-69 and Cys-106–Cys-142. A PDZ-binding domain motif is present at residues Thr-151–Val-153.

This sequence belongs to the papillomaviridae E6 protein family. As to quaternary structure, forms homodimers. Interacts with ubiquitin-protein ligase UBE3A/E6-AP and thus forms a complex with human TP53. Interacts with human NFX1 and MAGI3. Interacts with human IRF3; this interaction inhibits the establishment of antiviral state. Interacts with human TYK2; this interaction inhibits JAK-STAT activation by interferon alpha. Interacts with host DLG1; this interaction leads to the proteasomal degradation of DLG1.

Its subcellular location is the host cytoplasm. The protein localises to the host nucleus. In terms of biological role, plays a major role in the induction and maintenance of cellular transformation. Acts mainly as an oncoprotein by stimulating the destruction of many host cell key regulatory proteins. E6 associates with host UBE3A/E6-AP ubiquitin-protein ligase, and inactivates tumor suppressors TP53 and TP73 by targeting them to the 26S proteasome for degradation. In turn, DNA damage and chromosomal instabilities increase and lead to cell proliferation and cancer development. The complex E6/E6AP targets several other substrates to degradation via the proteasome including host DLG1 or NFX1, a repressor of human telomerase reverse transcriptase (hTERT). The resulting increased expression of hTERT prevents the shortening of telomere length leading to cell immortalization. Other cellular targets including BAK1, Fas-associated death domain-containing protein (FADD) and procaspase 8, are degraded by E6/E6AP causing inhibition of apoptosis. E6 also inhibits immune response by interacting with host IRF3 and TYK2. These interactions prevent IRF3 transcriptional activities and inhibit TYK2-mediated JAK-STAT activation by interferon alpha resulting in inhibition of the interferon signaling pathway. This chain is Protein E6, found in Homo sapiens (Human).